The sequence spans 344 residues: Holliday junction branch migration complex subunit RuvB (344 aa).

Positions 1–10 are enriched in low complexity; the sequence is MAIQSSSSGS. Residues 1–37 form a disordered region; the sequence is MAIQSSSSGSKPPAPKRLVAPEATAAEGDGGRDEGLR. The segment at 13–197 is large ATPase domain (RuvB-L); that stretch reads PAPKRLVAPE…FGLIQRLEFY (185 aa). ATP-binding positions include leucine 36, arginine 37, glycine 78, lysine 81, threonine 82, threonine 83, 144 to 146, arginine 187, tyrosine 197, and arginine 234; that span reads EDF. Threonine 82 lines the Mg(2+) pocket. The small ATPAse domain (RuvB-S) stretch occupies residues 198 to 268; it reads SCSDLEAIVS…VVVEALAMHR (71 aa). Residues 271-344 are head domain (RuvB-H); it reads GRGLDPSDRR…DAGRAHLEAA (74 aa). 2 residues coordinate DNA: arginine 326 and arginine 331.

The protein belongs to the RuvB family. Homohexamer. Forms an RuvA(8)-RuvB(12)-Holliday junction (HJ) complex. HJ DNA is sandwiched between 2 RuvA tetramers; dsDNA enters through RuvA and exits via RuvB. An RuvB hexamer assembles on each DNA strand where it exits the tetramer. Each RuvB hexamer is contacted by two RuvA subunits (via domain III) on 2 adjacent RuvB subunits; this complex drives branch migration. In the full resolvosome a probable DNA-RuvA(4)-RuvB(12)-RuvC(2) complex forms which resolves the HJ.

It localises to the cytoplasm. The enzyme catalyses ATP + H2O = ADP + phosphate + H(+). The RuvA-RuvB-RuvC complex processes Holliday junction (HJ) DNA during genetic recombination and DNA repair, while the RuvA-RuvB complex plays an important role in the rescue of blocked DNA replication forks via replication fork reversal (RFR). RuvA specifically binds to HJ cruciform DNA, conferring on it an open structure. The RuvB hexamer acts as an ATP-dependent pump, pulling dsDNA into and through the RuvAB complex. RuvB forms 2 homohexamers on either side of HJ DNA bound by 1 or 2 RuvA tetramers; 4 subunits per hexamer contact DNA at a time. Coordinated motions by a converter formed by DNA-disengaged RuvB subunits stimulates ATP hydrolysis and nucleotide exchange. Immobilization of the converter enables RuvB to convert the ATP-contained energy into a lever motion, pulling 2 nucleotides of DNA out of the RuvA tetramer per ATP hydrolyzed, thus driving DNA branch migration. The RuvB motors rotate together with the DNA substrate, which together with the progressing nucleotide cycle form the mechanistic basis for DNA recombination by continuous HJ branch migration. Branch migration allows RuvC to scan DNA until it finds its consensus sequence, where it cleaves and resolves cruciform DNA. The protein is Holliday junction branch migration complex subunit RuvB of Synechococcus sp. (strain RCC307).